The sequence spans 929 residues: LPS-assembly protein LptD (929 aa).

A signal peptide spans 1–33 (MAVKSLVFRRKFPLLVTGSLLALQPVAALTVQA). A disordered region spans residues 58 to 101 (NLPPRPAHTATSVSTAAAGSSVSGSGGETVEAEPTQRLVTESGG). The segment covering 66–90 (TATSVSTAAAGSSVSGSGGETVEAE) has biased composition (low complexity).

This sequence belongs to the LptD family. Component of the lipopolysaccharide transport and assembly complex. Interacts with LptE and LptA.

It localises to the cell outer membrane. Its function is as follows. Together with LptE, is involved in the assembly of lipopolysaccharide (LPS) at the surface of the outer membrane. In Pseudomonas aeruginosa (strain LESB58), this protein is LPS-assembly protein LptD.